The following is a 294-amino-acid chain: 4-hydroxy-tetrahydrodipicolinate synthase (294 aa).

Residue Thr45 participates in pyruvate binding. The active-site Proton donor/acceptor is the Tyr133. Catalysis depends on Lys161, which acts as the Schiff-base intermediate with substrate. Ile203 contacts pyruvate.

This sequence belongs to the DapA family. In terms of assembly, homotetramer; dimer of dimers.

The protein localises to the cytoplasm. The enzyme catalyses L-aspartate 4-semialdehyde + pyruvate = (2S,4S)-4-hydroxy-2,3,4,5-tetrahydrodipicolinate + H2O + H(+). It functions in the pathway amino-acid biosynthesis; L-lysine biosynthesis via DAP pathway; (S)-tetrahydrodipicolinate from L-aspartate: step 3/4. In terms of biological role, catalyzes the condensation of (S)-aspartate-beta-semialdehyde [(S)-ASA] and pyruvate to 4-hydroxy-tetrahydrodipicolinate (HTPA). The chain is 4-hydroxy-tetrahydrodipicolinate synthase from Shewanella frigidimarina (strain NCIMB 400).